Consider the following 561-residue polypeptide: MSDNNRSRHITEGVARAPNRAMYYALGYTEADFQNPMIGVANGHSTITPCNSGLQRLADAAIEAIRVSRANPQVFGTPTISDGMSMGTEGMKYSLVSREVIADCIETAAQGQWMDGVVVIGGCDKNMPGGMMALARMNVPGIYVYGGTIKPGHYKGKDLTIVSVFEAVGEYTMGRMDETDFKAIEQCAIPGSGSCGGMYTANTMSSAFEAMGMSLPHSSTMANEDQEKVASAAESARVLVEAVRRQLRPRDIITRASIENAVAVIMATGGSTNAVLHFLAIAHAAEVPWNIDDFERIRKRVPVICDLKPSGKYVATDLHRAGGIPQVMKILLNAGLLHGDCITITGKTVAETLANVPDAPPPGQDVIMPIERALYPQGHLAILKGNLSPEGCVAKITGLKNPVITGPARVFDSEDDAMSAIMDRRIRDGDVVVIRYEGPKGGPGMREMLAPTSALVGQGLGETVGLITDGRFSGGTWGMVVGHVAPEAFVGGPIALIREGDSVTIDAHQLLLQLNISDEEMAARRKAWAQPKPRYVRGVLAKFGKLACTASRGAVTDAFEE.

[2Fe-2S] cluster is bound at residue C50. Residue D82 participates in Mg(2+) binding. C123 provides a ligand contact to [2Fe-2S] cluster. 2 residues coordinate Mg(2+): D124 and K125. At K125 the chain carries N6-carboxylysine. C195 serves as a coordination point for [2Fe-2S] cluster. E447 contributes to the Mg(2+) binding site. S473 (proton acceptor) is an active-site residue.

The protein belongs to the IlvD/Edd family. In terms of assembly, homodimer. The cofactor is [2Fe-2S] cluster. Requires Mg(2+) as cofactor.

It carries out the reaction (2R)-2,3-dihydroxy-3-methylbutanoate = 3-methyl-2-oxobutanoate + H2O. The catalysed reaction is (2R,3R)-2,3-dihydroxy-3-methylpentanoate = (S)-3-methyl-2-oxopentanoate + H2O. It participates in amino-acid biosynthesis; L-isoleucine biosynthesis; L-isoleucine from 2-oxobutanoate: step 3/4. The protein operates within amino-acid biosynthesis; L-valine biosynthesis; L-valine from pyruvate: step 3/4. Its function is as follows. Functions in the biosynthesis of branched-chain amino acids. Catalyzes the dehydration of (2R,3R)-2,3-dihydroxy-3-methylpentanoate (2,3-dihydroxy-3-methylvalerate) into 2-oxo-3-methylpentanoate (2-oxo-3-methylvalerate) and of (2R)-2,3-dihydroxy-3-methylbutanoate (2,3-dihydroxyisovalerate) into 2-oxo-3-methylbutanoate (2-oxoisovalerate), the penultimate precursor to L-isoleucine and L-valine, respectively. The polypeptide is Dihydroxy-acid dehydratase 3 (Bordetella bronchiseptica (strain ATCC BAA-588 / NCTC 13252 / RB50) (Alcaligenes bronchisepticus)).